A 382-amino-acid polypeptide reads, in one-letter code: Queuine tRNA-ribosyltransferase (382 aa).

Aspartate 89 (proton acceptor) is an active-site residue. Substrate is bound by residues 89–93 (DSGGF), aspartate 143, glutamine 187, and glycine 214. The tract at residues 245–251 (GVGKPED) is RNA binding. Aspartate 264 serves as the catalytic Nucleophile. The interval 269–273 (TRNAR) is RNA binding; important for wobble base 34 recognition. Zn(2+)-binding residues include cysteine 302, cysteine 304, cysteine 307, and histidine 333.

This sequence belongs to the queuine tRNA-ribosyltransferase family. In terms of assembly, homodimer. Within each dimer, one monomer is responsible for RNA recognition and catalysis, while the other monomer binds to the replacement base PreQ1. It depends on Zn(2+) as a cofactor.

The catalysed reaction is 7-aminomethyl-7-carbaguanine + guanosine(34) in tRNA = 7-aminomethyl-7-carbaguanosine(34) in tRNA + guanine. It functions in the pathway tRNA modification; tRNA-queuosine biosynthesis. In terms of biological role, catalyzes the base-exchange of a guanine (G) residue with the queuine precursor 7-aminomethyl-7-deazaguanine (PreQ1) at position 34 (anticodon wobble position) in tRNAs with GU(N) anticodons (tRNA-Asp, -Asn, -His and -Tyr). Catalysis occurs through a double-displacement mechanism. The nucleophile active site attacks the C1' of nucleotide 34 to detach the guanine base from the RNA, forming a covalent enzyme-RNA intermediate. The proton acceptor active site deprotonates the incoming PreQ1, allowing a nucleophilic attack on the C1' of the ribose to form the product. After dissociation, two additional enzymatic reactions on the tRNA convert PreQ1 to queuine (Q), resulting in the hypermodified nucleoside queuosine (7-(((4,5-cis-dihydroxy-2-cyclopenten-1-yl)amino)methyl)-7-deazaguanosine). This is Queuine tRNA-ribosyltransferase from Sodalis glossinidius (strain morsitans).